Here is a 547-residue protein sequence, read N- to C-terminus: Ganoderic acid synthetase CYP5150L8 (547 aa).

The helical transmembrane segment at 2 to 22 threads the bilayer; that stretch reads PDSSLVLVAIAGAAYIFWLVF. Cys487 is a heme binding site.

This sequence belongs to the cytochrome P450 family. Heme serves as cofactor.

Its subcellular location is the membrane. The catalysed reaction is lanosterol + reduced [NADPH--hemoprotein reductase] + O2 = 26-hydroxylanosterol + oxidized [NADPH--hemoprotein reductase] + H2O + H(+). It catalyses the reaction 26-hydroxylanosterol + reduced [NADPH--hemoprotein reductase] + O2 = 26-oxolanosterol + oxidized [NADPH--hemoprotein reductase] + 2 H2O + H(+). The enzyme catalyses 26-oxolanosterol + reduced [NADPH--hemoprotein reductase] + O2 = 3beta-hydroxy-lanosta-8, 24-dien-26-oate + oxidized [NADPH--hemoprotein reductase] + H2O + 2 H(+). The protein operates within secondary metabolite biosynthesis; terpenoid biosynthesis. In terms of biological role, cytochrome P450 monooxygenase that is involved in the biosynthesis of ganoderic acids (GA), a group of highly oxygenated lanostane-type triterpenoids which well recognized as a main group of unique bioactive compounds in the medicinal mushroom Ganoderma lucidum. CYP5150L8 alone is able to catalyze the three-step oxidations at C-26 from lanosterol to 3-hydroxy-lanosta-8,24-dien-26-oic acid (also called ganoderic acid Z or HLDOA). The methyl group of lanosterol at C-26 is first oxidized into hydroxyl group to form 3-hydroxy-lanosta-8,24-dien-26-ol (HLDO). The hydroxyl group at C-26 of HLDO is further converted into a formyl group to form 3-hydroxy-lanosta-8,24-dien-26-al (HLDA). Finally, the formyl group is oxidized into a carboxyl group to produce 3-hydroxy-lanosta-8,24-dien-26-oic acid (HLDOA). In Ganoderma lucidum (Ling zhi medicinal fungus), this protein is Ganoderic acid synthetase CYP5150L8.